The chain runs to 615 residues: ABC transporter G family member 22 (615 aa).

The 249-residue stretch at 31–279 (ITFKDLAYSV…EIGFPFPDQT (249 aa)) folds into the ABC transporter domain. 67 to 74 (GPSGSGKT) contacts ATP. Residues 364-610 (SNCLVRFAVA…TMVFLCLHYF (247 aa)) enclose the ABC transmembrane type-2 domain. A run of 6 helical transmembrane segments spans residues 370–390 (FAVAVFVGLLFGACFSGLGMD), 400–420 (VLFYLVINMILQPFASISLFI), 442–462 (LALMFFEILACIGTAFILGTI), 477–497 (FFAMAILTLAHLAGDFFMLII), 508–528 (FAVGAGVATIYQLFAGFFVPI), and 587–607 (INLIIVSSFAFAFFTMVFLCL).

The protein belongs to the ABC transporter superfamily. ABCG family. Eye pigment precursor importer (TC 3.A.1.204) subfamily.

Its subcellular location is the membrane. In terms of biological role, may be involved in cell migration. The protein is ABC transporter G family member 22 (abcG22) of Dictyostelium discoideum (Social amoeba).